A 183-amino-acid chain; its full sequence is dTTP/UTP pyrophosphatase (183 aa).

The active-site Proton acceptor is Asp64.

The protein belongs to the Maf family. YhdE subfamily. Requires a divalent metal cation as cofactor.

Its subcellular location is the cytoplasm. The enzyme catalyses dTTP + H2O = dTMP + diphosphate + H(+). It catalyses the reaction UTP + H2O = UMP + diphosphate + H(+). Its function is as follows. Nucleoside triphosphate pyrophosphatase that hydrolyzes dTTP and UTP. May have a dual role in cell division arrest and in preventing the incorporation of modified nucleotides into cellular nucleic acids. In Acinetobacter baylyi (strain ATCC 33305 / BD413 / ADP1), this protein is dTTP/UTP pyrophosphatase.